Here is a 146-residue protein sequence, read N- to C-terminus: Phospholipase A2 PS22 (146 aa).

The N-terminal stretch at 1–19 is a signal peptide; sequence MYPAHLLVLLAVCVSLLGA. The propeptide occupies 20–27; sequence ASVPPQPL. Intrachain disulfides connect cysteine 38-cysteine 98, cysteine 54-cysteine 145, cysteine 56-cysteine 72, cysteine 71-cysteine 126, cysteine 78-cysteine 119, cysteine 87-cysteine 112, and cysteine 105-cysteine 117. Positions 55, 57, and 59 each coordinate Ca(2+). Histidine 75 is an active-site residue. Residue aspartate 76 participates in Ca(2+) binding. Residue aspartate 120 is part of the active site.

It belongs to the phospholipase A2 family. Group I subfamily. D49 sub-subfamily. The cofactor is Ca(2+). Expressed by the venom gland.

The protein resides in the secreted. The catalysed reaction is a 1,2-diacyl-sn-glycero-3-phosphocholine + H2O = a 1-acyl-sn-glycero-3-phosphocholine + a fatty acid + H(+). In terms of biological role, snake venom phospholipase A2 (PLA2) that inhibits collagen-induced platelet aggregation. PLA2 catalyzes the calcium-dependent hydrolysis of the 2-acyl groups in 3-sn-phosphoglycerides. In Drysdalia coronoides (White-lipped snake), this protein is Phospholipase A2 PS22.